The following is a 130-amino-acid chain: Ion transport peptide (130 aa).

Cystine bridges form between C62/C98, C78/C94, and C81/C107. L127 is modified (leucine amide).

This sequence belongs to the arthropod CHH/MIH/GIH/VIH hormone family. As to expression, brain and corpus cardiacum.

The protein localises to the secreted. Functionally, stimulates salt and water reabsorption and inhibits acid secretion in the ileum of S.gregaria. This is Ion transport peptide from Schistocerca gregaria (Desert locust).